Here is a 335-residue protein sequence, read N- to C-terminus: Anthranilate phosphoribosyltransferase (335 aa).

Residues glycine 79, 82–83 (GD), serine 87, 89–92 (NIST), 107–115 (KHGNRSITS), and serine 119 contribute to the 5-phospho-alpha-D-ribose 1-diphosphate site. Anthranilate is bound at residue glycine 79. Serine 91 is a binding site for Mg(2+). An anthranilate-binding site is contributed by asparagine 110. Arginine 165 serves as a coordination point for anthranilate. The Mg(2+) site is built by aspartate 224 and glutamate 225.

It belongs to the anthranilate phosphoribosyltransferase family. Homodimer. Mg(2+) is required as a cofactor.

It carries out the reaction N-(5-phospho-beta-D-ribosyl)anthranilate + diphosphate = 5-phospho-alpha-D-ribose 1-diphosphate + anthranilate. Its pathway is amino-acid biosynthesis; L-tryptophan biosynthesis; L-tryptophan from chorismate: step 2/5. Catalyzes the transfer of the phosphoribosyl group of 5-phosphorylribose-1-pyrophosphate (PRPP) to anthranilate to yield N-(5'-phosphoribosyl)-anthranilate (PRA). In Lactococcus lactis subsp. lactis (strain IL1403) (Streptococcus lactis), this protein is Anthranilate phosphoribosyltransferase.